We begin with the raw amino-acid sequence, 101 residues long: Apolipoprotein C-II (101 aa).

Positions Met1–Gly22 are cleaved as a signal peptide. Positions Ala66–Leu74 are lipid binding. Residues Ser78–Glu101 form a lipoprotein lipase cofactor region.

Belongs to the apolipoprotein C2 family. In terms of processing, proapolipoprotein C-II is synthesized as a sialic acid containing glycoprotein which is subsequently desialylated prior to its proteolytic processing. Proapolipoprotein C-II, the major form found in plasma undergoes proteolytic cleavage of its N-terminal hexapeptide to generate apolipoprotein C-II, which occurs as the minor form in plasma.

It localises to the secreted. In terms of biological role, component of chylomicrons, very low-density lipoproteins (VLDL), low-density lipoproteins (LDL), and high-density lipoproteins (HDL) in plasma. Plays an important role in lipoprotein metabolism as an activator of lipoprotein lipase. Both proapolipoprotein C-II and apolipoprotein C-II can activate lipoprotein lipase. This Colobus guereza (Mantled guereza) protein is Apolipoprotein C-II (APOC2).